Consider the following 386-residue polypeptide: 2-deoxy-scyllo-inosose synthase (386 aa).

NAD(+) contacts are provided by residues aspartate 42, 73 to 76 (EVHK), 105 to 109 (GITGN), 129 to 130 (TT), 140 to 142 (SLK), and 151 to 152 (KN). Lysine 142 is a catalytic residue. Glutamate 184 serves as a coordination point for Co(2+). Glutamate 244 is a catalytic residue. Co(2+)-binding residues include histidine 247 and histidine 263.

The protein belongs to the sugar phosphate cyclases superfamily. DOI synthase family. Requires NAD(+) as cofactor. It depends on Co(2+) as a cofactor.

The enzyme catalyses D-glucose 6-phosphate = 2-deoxy-L-scyllo-inosose + phosphate. The protein operates within metabolic intermediate biosynthesis; 2-deoxystreptamine biosynthesis; 2-deoxystreptamine from D-glucose 6-phosphate: step 1/4. It functions in the pathway antibiotic biosynthesis; paromomycin biosynthesis. Its function is as follows. Catalyzes the intramolecular carbocycle formation from D-glucose-6-phosphate to 2-deoxy-scyllo-inosose (DOI). This chain is 2-deoxy-scyllo-inosose synthase (parC), found in Streptomyces paromomycinus (Streptomyces rimosus subsp. paromomycinus).